The primary structure comprises 1607 residues: Putative molluscan insulin-related peptide(s) receptor (1607 aa).

The first 35 residues, M1–A35, serve as a signal peptide directing secretion. N-linked (GlcNAc...) asparagine glycosylation is found at N82, N188, N245, N275, N332, N343, N495, N520, N663, N710, N778, N796, N802, N868, N879, N940, and N953. Fibronectin type-III domains follow at residues H517–F632, E636–E726, and L756–S861. At E698–T975 the chain is on the extracellular side. In terms of domain architecture, Fibronectin type-III 4 spans T870–P967. A helical membrane pass occupies residues L976–A996. The Cytoplasmic portion of the chain corresponds to C997–L1607. In terms of domain architecture, Protein kinase spans I1037 to L1308. Residues L1043 to V1051 and K1072 contribute to the ATP site. The Proton acceptor role is filled by D1173. Y1199 is modified (phosphotyrosine; by autocatalysis). 2 disordered regions span residues G1328–E1352 and T1501–W1539. A compositionally biased stretch (polar residues) spans N1503 to E1515. Over residues S1524–S1538 the composition is skewed to low complexity.

It belongs to the protein kinase superfamily. Tyr protein kinase family. Insulin receptor subfamily. As to quaternary structure, probable tetramer of 2 alpha and 2 beta chains linked by disulfide bonds. The alpha chains contribute to the formation of the ligand-binding domain, while the beta chains carry the kinase domain. It depends on Mn(2+) as a cofactor.

The protein localises to the membrane. It catalyses the reaction L-tyrosyl-[protein] + ATP = O-phospho-L-tyrosyl-[protein] + ADP + H(+). Functionally, this receptor probably binds to the four different molluscan insulin-related peptides and has a tyrosine-protein kinase activity. In Lymnaea stagnalis (Great pond snail), this protein is Putative molluscan insulin-related peptide(s) receptor.